Consider the following 1038-residue polypeptide: P3N-PIPO polyprotein (1038 aa).

The Peptidase S30 domain occupies 170–313 (LVAKSDFDDL…AGDVGRTMHY (144 aa)). Residues H224, E233, and S266 each act as for P1 proteinase activity in the active site. Residues 365–368 (KMAC) carry the Involved in interaction with stylet and aphid transmission motif. The Involved in virions binding and aphid transmission signature appears at 622-624 (PTK). The region spanning 648-770 (MYIAKEGYCY…EGEMKWYRVG (123 aa)) is the Peptidase C6 domain. Active-site for helper component proteinase activity residues include C656 and H729.

This sequence belongs to the potyviridae P3N-PIPO polyprotein family. As to quaternary structure, interacts (via PIPO domain) with host PCaP1 protein; this interaction may help to anchor the movement complex to the plasma membrane from which the complex could move to the plasmodesmata. Post-translationally, potyviral RNA is expressed as two polyproteins which undergo post-translational proteolytic processing. Genome polyprotein is processed by NIa-pro, P1 and HC-pro proteinases resulting in the production of at least ten individual proteins. P3N-PIPO is cleaved by P1 and HC-pro proteinases resulting in the production of three individual proteins. The P1 proteinase and the HC-pro cleave only their respective C-termini autocatalytically.

Its subcellular location is the host cell junction. The protein localises to the host plasmodesma. The catalysed reaction is Hydrolyzes a Gly-|-Gly bond at its own C-terminus, commonly in the sequence -Tyr-Xaa-Val-Gly-|-Gly, in the processing of the potyviral polyprotein.. Functionally, required for aphid transmission and also has proteolytic activity. Only cleaves a Gly-Gly dipeptide at its own C-terminus. Interacts with virions and aphid stylets. Acts as a suppressor of RNA-mediated gene silencing, also known as post-transcriptional gene silencing (PTGS), a mechanism of plant viral defense that limits the accumulation of viral RNAs. May have RNA-binding activity. In terms of biological role, allows efficient cell to cell propagation, by bypassing the host cell wall barrier. Transports viral genome to neighboring plant cells directly through plasmosdesmata, without any budding. In Beet mosaic virus (BtMV), this protein is P3N-PIPO polyprotein.